The sequence spans 2598 residues: Partially reducing polyketide synthase men1 (2598 aa).

The region spanning 7–435 is the Ketosynthase family 3 (KS3) domain; that stretch reads SQSIAIVGLS…GSNAHAILDD (429 aa). Active-site for beta-ketoacyl synthase activity residues include Cys181, His316, and His358. The span at 450–459 shows a compositional bias: basic residues; it reads GKSHHHHHQH. Disordered stretches follow at residues 450–490 and 537–557; these read GKSH…NGTT and AEKQ…DPEK. Positions 474–490 are enriched in low complexity; it reads VNGTSEVNGTSGVNGTT. In terms of domain architecture, Malonyl-CoA:ACP transacylase (MAT) spans 611 to 915; it reads YVFTGQGAQW…RGPVTQILQS (305 aa). An N-terminal hotdog fold region spans residues 1008 to 1151; sequence LGLIGAPMPN…GSVAVEFGAL (144 aa). The 318-residue stretch at 1008 to 1325 folds into the PKS/mFAS DH domain; that stretch reads LGLIGAPMPN…CVEMPSASGM (318 aa). Residues 1009–1323 are dehydratase (DH) domain; it reads GLIGAPMPNF…LVCVEMPSAS (315 aa). The segment at 1169 to 1325 is C-terminal hotdog fold; the sequence is TISQEVDVFY…CVEMPSASGM (157 aa). In terms of domain architecture, Enoyl reductase (ER) spans 1886–2197; the sequence is GMLNTLCFEI…ARSRQDKIVI (312 aa). The Ketoreductase (KR) domain maps to 2222 to 2399; that stretch reads TYLIAGGLGG…AATIDLGIVK (178 aa). The Carrier domain occupies 2510–2587; sequence EAARLVSAAV…AFASDLAKKG (78 aa). Ser2547 carries the post-translational modification O-(pantetheine 4'-phosphoryl)serine.

Pantetheine 4'-phosphate is required as a cofactor.

Its pathway is secondary metabolite biosynthesis. Partially reducing polyketide synthase; part of the gene cluster that mediates the biosynthesis of menisporopsin A, a bioactive macrocyclic polylactone. The biosynthesis of menisporopsin A is performed by a reducing (man1) and a non-reducing (men2) polyketide synthase that catalyze the formation of each menisporopsin A subunits, while the esterification and cyclolactonization activities are probably peformed by the unusual thioesterase domain of men2. First, a reduced diketide intermediate, 3-hydroxybutyryl-S-ACP is produced by men1 and transferred to men2; this is followed by a second reduced diketide which is further elongated using 3 units of malonyl-coA to form a reduced pentaketide. The cyclization of this intermediate by the PT domain forms the second subunit, 2,4-dihydroxy-6-(2-hydroxy-n-propyl)benzoyl-S-ACP. The TE domain of men2 then esterifies the secondary hydroxyl group on the side chain of the second subunit with the acyl-TE of the first subunit to form the first ester intermediate. This process occurs iteratively to form a linear tetraester intermediate. The final subunit is formed by a similar process, except that an extra malonyl-CoA is required in an additional elongation step to form a reduced hexaketide intermediate, and the carbonyl group next to the secondary hydroxyl group is reduced by a trans-acting ketoreductase. Again, the PT domain catalyzes cyclization to form the largest subunit, 2,4-dihydroxy-6-(2,4-dihydroxy-n-pentyl) benzoyl-S-ACP. Then the linear pentaester intermediate is formed. In this step, if the intermediate transfer rate is slow, intra- molecular cyclization involving the secondary hydroxyl group of the pentaester intermediate may occur to form menisporopsin B. Alternatively, transfer of the pentaester intermediate to the TE domain would allow cyclolactonization to be catalyzed by the TE to form menisporopsin A. In Menisporopsis theobromae, this protein is Partially reducing polyketide synthase men1.